The sequence spans 981 residues: Isoleucine--tRNA ligase (981 aa).

The short motif at 50–60 (PTTNGMPHVGH) is the 'HIGH' region element. Positions 604–608 (KMSKS) match the 'KMSKS' region motif. Position 607 (Lys607) interacts with ATP.

The protein belongs to the class-I aminoacyl-tRNA synthetase family. IleS type 2 subfamily. Monomer. It depends on Zn(2+) as a cofactor.

Its subcellular location is the cytoplasm. The catalysed reaction is tRNA(Ile) + L-isoleucine + ATP = L-isoleucyl-tRNA(Ile) + AMP + diphosphate. Functionally, catalyzes the attachment of isoleucine to tRNA(Ile). As IleRS can inadvertently accommodate and process structurally similar amino acids such as valine, to avoid such errors it has two additional distinct tRNA(Ile)-dependent editing activities. One activity is designated as 'pretransfer' editing and involves the hydrolysis of activated Val-AMP. The other activity is designated 'posttransfer' editing and involves deacylation of mischarged Val-tRNA(Ile). This Pyrobaculum aerophilum (strain ATCC 51768 / DSM 7523 / JCM 9630 / CIP 104966 / NBRC 100827 / IM2) protein is Isoleucine--tRNA ligase.